We begin with the raw amino-acid sequence, 287 residues long: Glutamate racemase (287 aa).

A compositionally biased stretch (polar residues) spans 1-15 (MATKPQDANTTSREA). A disordered region spans residues 1–25 (MATKPQDANTTSREAITSKADSPPR). Residues 32–33 (DS) and 64–65 (YG) contribute to the substrate site. Cysteine 96 functions as the Proton donor/acceptor in the catalytic mechanism. 97–98 (NT) provides a ligand contact to substrate. Cysteine 208 serves as the catalytic Proton donor/acceptor. 209-210 (TH) is a substrate binding site.

The protein belongs to the aspartate/glutamate racemases family.

It catalyses the reaction L-glutamate = D-glutamate. The protein operates within cell wall biogenesis; peptidoglycan biosynthesis. Provides the (R)-glutamate required for cell wall biosynthesis. This is Glutamate racemase from Yersinia pseudotuberculosis serotype O:1b (strain IP 31758).